A 157-amino-acid polypeptide reads, in one-letter code: Transcription factor HES-2 (157 aa).

One can recognise a bHLH domain in the interval 13–70 (LRKNLKPLLEKRRRARINESLSQLKGLVLPLLGAETSRSSKLEKADILEMTVRFLQEQ). The region spanning 86 to 119 (YLEGYRACLARLARVLPACSVLEPAVSARLLEHL) is the Orange domain. The interval 124–157 (VSDDSPSLTLPPAPAPAPSPPVPPPGSSGLWRPW) is disordered. Pro residues predominate over residues 132 to 149 (TLPPAPAPAPSPPVPPPG). A WRPW motif motif is present at residues 154-157 (WRPW).

As to quaternary structure, transcription repression requires formation of a complex with a corepressor protein of the Groucho/TLE family.

Its subcellular location is the nucleus. In terms of biological role, transcriptional repressor of genes that require a bHLH protein for their transcription. This is Transcription factor HES-2 (Hes2) from Mus musculus (Mouse).